Reading from the N-terminus, the 169-residue chain is uncharacterized protein (169 aa).

Phosphoserine is present on S165.

This is an uncharacterized protein from Drosophila melanogaster (Fruit fly).